Consider the following 432-residue polypeptide: GTPase Obg (432 aa).

In terms of domain architecture, Obg spans methionine 1–leucine 158. The region spanning alanine 159–glutamate 335 is the OBG-type G domain. Residues glycine 165–serine 172, phenylalanine 190–valine 194, aspartate 212–glycine 215, serine 282–aspartate 285, and serine 316–leucine 318 contribute to the GTP site. 2 residues coordinate Mg(2+): serine 172 and threonine 192. Positions threonine 354–glutamate 432 constitute an OCT domain.

The protein belongs to the TRAFAC class OBG-HflX-like GTPase superfamily. OBG GTPase family. As to quaternary structure, monomer. Mg(2+) is required as a cofactor.

It localises to the cytoplasm. In terms of biological role, an essential GTPase which binds GTP, GDP and possibly (p)ppGpp with moderate affinity, with high nucleotide exchange rates and a fairly low GTP hydrolysis rate. Plays a role in control of the cell cycle, stress response, ribosome biogenesis and in those bacteria that undergo differentiation, in morphogenesis control. The chain is GTPase Obg from Ligilactobacillus salivarius (strain UCC118) (Lactobacillus salivarius).